Here is a 547-residue protein sequence, read N- to C-terminus: Glucose-6-phosphate isomerase (547 aa).

The active-site Proton donor is Glu353. Residues His384 and Lys512 contribute to the active site.

This sequence belongs to the GPI family.

The protein resides in the cytoplasm. The enzyme catalyses alpha-D-glucose 6-phosphate = beta-D-fructose 6-phosphate. It participates in carbohydrate biosynthesis; gluconeogenesis. The protein operates within carbohydrate degradation; glycolysis; D-glyceraldehyde 3-phosphate and glycerone phosphate from D-glucose: step 2/4. Catalyzes the reversible isomerization of glucose-6-phosphate to fructose-6-phosphate. The polypeptide is Glucose-6-phosphate isomerase (Pseudoalteromonas atlantica (strain T6c / ATCC BAA-1087)).